The chain runs to 236 residues: Phosphoribosylaminoimidazole-succinocarboxamide synthase (236 aa).

It belongs to the SAICAR synthetase family.

The enzyme catalyses 5-amino-1-(5-phospho-D-ribosyl)imidazole-4-carboxylate + L-aspartate + ATP = (2S)-2-[5-amino-1-(5-phospho-beta-D-ribosyl)imidazole-4-carboxamido]succinate + ADP + phosphate + 2 H(+). The protein operates within purine metabolism; IMP biosynthesis via de novo pathway; 5-amino-1-(5-phospho-D-ribosyl)imidazole-4-carboxamide from 5-amino-1-(5-phospho-D-ribosyl)imidazole-4-carboxylate: step 1/2. The sequence is that of Phosphoribosylaminoimidazole-succinocarboxamide synthase from Pseudomonas putida (strain W619).